A 333-amino-acid chain; its full sequence is Squamosa promoter-binding-like protein 8 (333 aa).

The tract at residues 1–28 (MLDYEWDNPSSIVLSGDERNPDSDPTRS) is disordered. Residues 16–25 (GDERNPDSDP) are compositionally biased toward basic and acidic residues. Positions 179-269 (MANSLSTPRC…RKCHQSASAT (91 aa)) are sufficient and necessary for DNA binding. Residues 185-262 (TPRCQAEGCN…ADHNRRRRKC (78 aa)) form an SBP-type zinc finger. Residues Cys188, Cys193, Cys210, His213, Cys229, Cys232, His236, and Cys248 each coordinate Zn(2+). The short motif at 245 to 261 (KRSCRKRLADHNRRRRK) is the Bipartite nuclear localization signal element. Disordered regions lie at residues 254–303 (DHNR…TISL) and 314–333 (TASS…FSSG). Polar residues predominate over residues 264–284 (QSASATQDTGTGKTTPKSPND). Residues 289 to 299 (ASSSPSSNAPP) show a composition bias toward low complexity.

The cofactor is Zn(2+). Expressed in shoot apical region and early floral tissues. Transcripts levels increase in developing pollen sacs, and decrease in later stage of anther development. Strongly expressed in the placental region of the carpels.

Its subcellular location is the nucleus. The protein resides in the cytoplasm. In terms of biological role, trans-acting factor that binds specifically to the consensus nucleotide sequence 5'-TNCGTACAA-3'. Binds specifically to the 5'-GTAC-3' core sequence. Involved in development and floral organogenesis. Required for ovule differentiation, pollen production, filament elongation, seed formation and siliques elongation. Also seems to play a role in the formation of trichomes on sepals. May positively modulate gibberellin (GA) signaling in flower. The polypeptide is Squamosa promoter-binding-like protein 8 (SPL8) (Arabidopsis thaliana (Mouse-ear cress)).